The chain runs to 240 residues: Endonuclease V (240 aa).

Mg(2+) is bound by residues Asp46 and Asp116.

It belongs to the endonuclease V family. Requires Mg(2+) as cofactor.

Its subcellular location is the cytoplasm. The enzyme catalyses Endonucleolytic cleavage at apurinic or apyrimidinic sites to products with a 5'-phosphate.. Functionally, DNA repair enzyme involved in the repair of deaminated bases. Selectively cleaves double-stranded DNA at the second phosphodiester bond 3' to a deoxyinosine leaving behind the intact lesion on the nicked DNA. The chain is Endonuclease V from Rhodospirillum centenum (strain ATCC 51521 / SW).